We begin with the raw amino-acid sequence, 497 residues long: Probable cytosol aminopeptidase (497 aa).

Residues Lys-263 and Asp-268 each contribute to the Mn(2+) site. Residue Lys-275 is part of the active site. Residues Asp-286, Asp-345, and Glu-347 each contribute to the Mn(2+) site. Arg-349 is an active-site residue.

This sequence belongs to the peptidase M17 family. The cofactor is Mn(2+).

It localises to the cytoplasm. The catalysed reaction is Release of an N-terminal amino acid, Xaa-|-Yaa-, in which Xaa is preferably Leu, but may be other amino acids including Pro although not Arg or Lys, and Yaa may be Pro. Amino acid amides and methyl esters are also readily hydrolyzed, but rates on arylamides are exceedingly low.. It catalyses the reaction Release of an N-terminal amino acid, preferentially leucine, but not glutamic or aspartic acids.. In terms of biological role, presumably involved in the processing and regular turnover of intracellular proteins. Catalyzes the removal of unsubstituted N-terminal amino acids from various peptides. The chain is Probable cytosol aminopeptidase from Allorhizobium ampelinum (strain ATCC BAA-846 / DSM 112012 / S4) (Agrobacterium vitis (strain S4)).